Here is a 37-residue protein sequence, read N- to C-terminus: Large ribosomal subunit protein bL36 (37 aa).

It belongs to the bacterial ribosomal protein bL36 family.

The polypeptide is Large ribosomal subunit protein bL36 (Thermus thermophilus (strain ATCC BAA-163 / DSM 7039 / HB27)).